The chain runs to 429 residues: Aspartate--tRNA(Asp/Asn) ligase (429 aa).

E167 lines the L-aspartate pocket. The tract at residues 189–192 is aspartate; it reads QLYK. R210 provides a ligand contact to L-aspartate. ATP is bound by residues 210–212 and E352; that span reads RAE. 2 residues coordinate Mg(2+): E352 and S355. L-aspartate-binding residues include S355 and R359. 400 to 403 is an ATP binding site; the sequence is GLAR.

Belongs to the class-II aminoacyl-tRNA synthetase family. Type 2 subfamily. In terms of assembly, homodimer. It depends on Mg(2+) as a cofactor.

It localises to the cytoplasm. The catalysed reaction is tRNA(Asx) + L-aspartate + ATP = L-aspartyl-tRNA(Asx) + AMP + diphosphate. Functionally, aspartyl-tRNA synthetase with relaxed tRNA specificity since it is able to aspartylate not only its cognate tRNA(Asp) but also tRNA(Asn). Reaction proceeds in two steps: L-aspartate is first activated by ATP to form Asp-AMP and then transferred to the acceptor end of tRNA(Asp/Asn). The chain is Aspartate--tRNA(Asp/Asn) ligase from Saccharolobus solfataricus (strain ATCC 35092 / DSM 1617 / JCM 11322 / P2) (Sulfolobus solfataricus).